A 330-amino-acid polypeptide reads, in one-letter code: MKTAYIAKQRQISFVKSHFSRQLEERLGLIEVQAPILSRVGDGTQDNLSGCEKAVQVKVKALPDAQFEVVHSLAKWKRQTLGQHDFSAGEGLYTHMKALRPDEERLSPLHSVYVDQWDWERVMGDGERQFSTLKSTVEAIWAGIKATEAAVSEEFGLAPFLPDQIHFVHSQELLSRYPDLDAKGRERAIAKDLGAVFLVGIGGKLSDGHRHDVRAPDYDDWSTPSELGHAGLNGDILVWNPVLEDAFELSSMGIRVDADTLKHQLALTGDEDRLQLEWHQALLRGEMPQTIGGGIGQSRLTMLLLQLPHIGQVQCGVWPAAVRENVPSLL.

This sequence belongs to the class-II aminoacyl-tRNA synthetase family. AsnA subfamily.

The protein resides in the cytoplasm. It catalyses the reaction L-aspartate + NH4(+) + ATP = L-asparagine + AMP + diphosphate + H(+). The protein operates within amino-acid biosynthesis; L-asparagine biosynthesis; L-asparagine from L-aspartate (ammonia route): step 1/1. In Escherichia coli O139:H28 (strain E24377A / ETEC), this protein is Aspartate--ammonia ligase.